Consider the following 3994-residue polypeptide: Hybrid PKS-NRPs synthetase opdA (3994 aa).

The 437-residue stretch at proline 6–serine 442 folds into the Ketosynthase family 3 (KS3) domain. Catalysis depends on for beta-ketoacyl synthase activity residues cysteine 179, histidine 316, and histidine 362. Positions valine 559 to alanine 881 are malonyl-CoA:ACP transacylase (MAT) domain. Residues histidine 951–threonine 1085 are N-terminal hotdog fold. The interval histidine 951–alanine 1251 is dehydratase (DH) domain. The 302-residue stretch at histidine 951 to glutamate 1252 folds into the PKS/mFAS DH domain. Histidine 983 functions as the Proton acceptor; for dehydratase activity in the catalytic mechanism. The tract at residues leucine 1100 to glutamate 1252 is C-terminal hotdog fold. Aspartate 1159 serves as the catalytic Proton donor; for dehydratase activity. The segment at aspartate 1292–aspartate 1593 is methyltransferase (MT) domain. The ketoreductase (KR) domain stretch occupies residues threonine 2123–threonine 2297. The region spanning glutamate 2406 to leucine 2483 is the Carrier 1 domain. Serine 2443 is modified (O-(pantetheine 4'-phosphoryl)serine). The disordered stretch occupies residues glutamine 2486–proline 2575. 2 stretches are compositionally biased toward polar residues: residues leucine 2505–threonine 2514 and threonine 2522–aspartate 2546. Residues threonine 2547 to isoleucine 2556 show a composition bias toward basic and acidic residues. Over residues serine 2557–aspartate 2570 the composition is skewed to acidic residues. A condensation (C) domain region spans residues arginine 2582 to isoleucine 3007. The tract at residues histidine 3043–leucine 3436 is adenylation (A) (KR) domain. The region spanning proline 3553–arginine 3630 is the Carrier 2 domain. An O-(pantetheine 4'-phosphoryl)serine modification is found at serine 3590. The interval threonine 3679 to alanine 3895 is reductase (RED) domain.

It in the C-terminal section; belongs to the NRP synthetase family. Requires pantetheine 4'-phosphate as cofactor.

Its pathway is secondary metabolite biosynthesis. Its function is as follows. Hybrid PKS-NRPS synthetase; part of the gene cluster that mediates the biosynthesis of oxopyrrolidines, polyketide-amino acid hybrid compounds with feature structures of tetramic acid. The polyketide chain is first assembled by the highly reducing PKS module of opdA using acetyl-CoA as the starter unit and five malonyl-CoA as the extender units. OpdC acts as trans-acting enoyl reductase and reduces the terminal alkenyl to alkane. The 17R in oxopyrrolidine A and 15R, 17S in oxopyrrolidine B are generated by non-stereospecific catalysis of the ketoreductase (KR) domain and enoyl reductases. Then the polyketides with specific configurations are transferred to the NRPS module of opdA and linked to L-tyrosine to form an amide bond. Finally, the oxopyrrolidines are offloaded through a Dieckmann cyclization catalyzed by the terminal D domain to give a tetramic acid moiety. The protein is Hybrid PKS-NRPs synthetase opdA of Penicillium oxalicum (strain 114-2 / CGMCC 5302) (Penicillium decumbens).